Reading from the N-terminus, the 4299-residue chain is DNA-dependent protein kinase catalytic subunit (4299 aa).

A coiled-coil region spans residues 551–590 (KDLNSTIKKENNNNNNNKNKNNNNNQTLTKEEISKSIKKL). Disordered regions lie at residues 557 to 577 (IKKE…NNQT), 613 to 633 (DEND…DQDN), 878 to 917 (NSSD…MKFK), and 1206 to 1230 (SSSK…EDGT). Composition is skewed to low complexity over residues 562–575 (NNNN…NNNN), 617–631 (NNSN…NNDQ), 878–893 (NSSD…IDSG), and 1206–1226 (SSSK…NNNS). Residue S2789 is modified to Phosphoserine; by autocatalysis. Phosphothreonine; by autocatalysis occurs at positions 2814 and 2822. A compositionally biased stretch (low complexity) spans 2832–2867 (SSSQSYGGTNNNTGSSQLSSSSSSSGSQSSSQNNSS). 2 disordered regions span residues 2832–2881 (SSSQ…PKLI) and 3535–3559 (TTSS…SSSQ). The FAT domain maps to 3031–3707 (KIKDISLNSN…YFPFKISSEQ (677 aa)). The PI3K/PI4K catalytic domain occupies 3887–4226 (FDTNVLVMGS…AKKKLELVNP (340 aa)). Residues 3893-3899 (VMGSLRK) form a G-loop region. Residues 4092–4100 (GIGDRHLEN) are catalytic loop. Residues 4112–4137 (GIDFGHAFGTATQFLPIPELMPFRLT) are activation loop. An FATC domain is found at 4267 to 4299 (VCSSVKEQIDCLIDQSTDPNILSRAWVGWNGAL).

This sequence belongs to the PI3/PI4-kinase family. DNAPK subfamily. In terms of processing, may be phosphorylated upon DNA damage. Could be autophosphorylated. Autophosphorylation induces a conformational change that leads to remodeling of the DNA-PK complex, requisite for efficient end processing and DNA repair. Post-translationally, autophosphorylated on Ser-2789, Thr-2814 and Thr-2822. Ser-2789 is a DNA damage-inducible phosphorylation site (inducible with ionizing radiation, IR).

The protein localises to the nucleus. Its subcellular location is the nucleolus. The catalysed reaction is L-seryl-[protein] + ATP = O-phospho-L-seryl-[protein] + ADP + H(+). It catalyses the reaction L-threonyl-[protein] + ATP = O-phospho-L-threonyl-[protein] + ADP + H(+). With respect to regulation, inhibited by wortmannin. Activity of the enzyme seems to be attenuated by autophosphorylation. Serine/threonine-protein kinase that acts as a molecular sensor for DNA damage. Is recruited to DNA ends by the Ku70/Ku80 heterodimer and is involved in DNA non-homologous end joining (NHEJ) required for double-strand break (DSB) repair and V(D)J recombination. This activity is only apparent when DNA damage is administered in G1 phase of the cell cycle. Required for efficient signaling of DNA double-stranded breaks via phosphorylation of H2AX during G1. This Dictyostelium discoideum (Social amoeba) protein is DNA-dependent protein kinase catalytic subunit (dnapkcs).